The chain runs to 320 residues: Ferrochelatase (320 aa).

The Fe cation site is built by His194 and Glu275.

Belongs to the ferrochelatase family. In terms of assembly, monomer.

It localises to the cytoplasm. The enzyme catalyses heme b + 2 H(+) = protoporphyrin IX + Fe(2+). Its pathway is porphyrin-containing compound metabolism; protoheme biosynthesis; protoheme from protoporphyrin-IX: step 1/1. Catalyzes the ferrous insertion into protoporphyrin IX. This Escherichia coli O127:H6 (strain E2348/69 / EPEC) protein is Ferrochelatase.